Reading from the N-terminus, the 84-residue chain is ATP synthase subunit c (84 aa).

2 helical membrane passes run 10–30 (IAVAIMIGLAALGTAIGFAIL) and 53–73 (FIVAGLLDAISMIAVGVALFF).

The protein belongs to the ATPase C chain family. In terms of assembly, F-type ATPases have 2 components, F(1) - the catalytic core - and F(0) - the membrane proton channel. F(1) has five subunits: alpha(3), beta(3), gamma(1), delta(1), epsilon(1). F(0) has three main subunits: a(1), b(2) and c(10-14). The alpha and beta chains form an alternating ring which encloses part of the gamma chain. F(1) is attached to F(0) by a central stalk formed by the gamma and epsilon chains, while a peripheral stalk is formed by the delta and b chains.

The protein resides in the cell inner membrane. Its function is as follows. F(1)F(0) ATP synthase produces ATP from ADP in the presence of a proton or sodium gradient. F-type ATPases consist of two structural domains, F(1) containing the extramembraneous catalytic core and F(0) containing the membrane proton channel, linked together by a central stalk and a peripheral stalk. During catalysis, ATP synthesis in the catalytic domain of F(1) is coupled via a rotary mechanism of the central stalk subunits to proton translocation. Key component of the F(0) channel; it plays a direct role in translocation across the membrane. A homomeric c-ring of between 10-14 subunits forms the central stalk rotor element with the F(1) delta and epsilon subunits. This chain is ATP synthase subunit c, found in Shewanella putrefaciens (strain CN-32 / ATCC BAA-453).